The chain runs to 538 residues: Syncytin-1 (538 aa).

A signal peptide spans 1-20; the sequence is MALPYHILLFTVLLPSFTLT. Residues 21–443 lie on the Extracellular side of the membrane; sequence APPPCRCMTS…NTGPWGLLSQ (423 aa). Asparagine 169 is a glycosylation site (N-linked (GlcNAc...) asparagine). The short motif at 186-189 is the CXXC element; it reads CWIC. 3 disulfides stabilise this stretch: cysteine 186-cysteine 189, cysteine 186-cysteine 405, and cysteine 397-cysteine 404. 4 N-linked (GlcNAc...) asparagine glycosylation sites follow: asparagine 208, asparagine 214, asparagine 234, and asparagine 281. Positions 320-340 are fusion peptide; sequence ILPFVIGAGVLGALGTGIGGI. Residues 380 to 396 are immunosuppression; that stretch reads LQNRRALDLLTAERGGT. Positions 397 to 405 match the CX6CC motif; sequence CLFLGEECC. N-linked (GlcNAc...) asparagine glycosylation occurs at asparagine 409. A helical membrane pass occupies residues 444–464; sequence WMPWILPFLGPLAAIILLLLF. The segment at 465-484 is essential for the fusiogenic function; that stretch reads GPCIFNLLVNFVSSRIEAVK. Residues 465 to 538 are Cytoplasmic-facing; the sequence is GPCIFNLLVN…LLRPNSAGSS (74 aa). Positions 496-538 are disordered; sequence KIYRRPLDRPASPRSDVNDIKCTPPEEISTAQPLLRPNSAGSS.

This sequence belongs to the gamma type-C retroviral envelope protein family. HERV class-I W env subfamily. In terms of assembly, the mature envelope protein (Env) consists of a trimer of SU-TM heterodimers attached probably by a labile interchain disulfide bond. Interacts with the C-type lectin CD209/DC-SIGN. In terms of processing, specific enzymatic cleavages in vivo yield mature proteins. Envelope glycoproteins are synthesized as an inactive precursor that is heavily N-glycosylated and processed likely by furin in the Golgi to yield the mature SU and TM proteins. The cleavage site between SU and TM requires the minimal sequence [KR]-X-[KR]-R. Post-translationally, the CXXC motif is highly conserved across a broad range of retroviral envelope proteins. It is thought to participate in the formation of a labile disulfide bond possibly with the CX6CC motif present in the transmembrane protein.

It is found in the cell membrane. The protein localises to the virion. This endogenous retroviral envelope protein has retained its original fusogenic properties and participates in trophoblast fusion and the formation of a syncytium during placenta morphogenesis. May recognize and induce fusion through binding of SLC1A4 and SLC1A5. Its function is as follows. Endogenous envelope proteins may have kept, lost or modified their original function during evolution. Retroviral envelope proteins mediate receptor recognition and membrane fusion during early infection. The surface protein (SU) mediates receptor recognition, while the transmembrane protein (TM) acts as a class I viral fusion protein. The protein may have at least 3 conformational states: pre-fusion native state, pre-hairpin intermediate state, and post-fusion hairpin state. During viral and target cell membrane fusion, the coiled coil regions (heptad repeats) assume a trimer-of-hairpins structure, positioning the fusion peptide in close proximity to the C-terminal region of the ectodomain. The formation of this structure appears to drive apposition and subsequent fusion of membranes. The chain is Syncytin-1 (ERVW-1) from Gorilla gorilla gorilla (Western lowland gorilla).